The sequence spans 331 residues: Glyoxylate reductase (331 aa).

NADP(+) contacts are provided by residues 158–161, 180–182, and 239–241; these read FGRI, SRT, and TSR. Catalysis depends on residues Arg-241 and Glu-270. His-288 serves as the catalytic Proton donor. 288–290 contacts NADP(+); sequence HIG.

Belongs to the D-isomer specific 2-hydroxyacid dehydrogenase family. GyaR subfamily. Homodimer.

The protein localises to the cytoplasm. The enzyme catalyses glycolate + NAD(+) = glyoxylate + NADH + H(+). The polypeptide is Glyoxylate reductase (Thermococcus litoralis (strain ATCC 51850 / DSM 5473 / JCM 8560 / NS-C)).